Consider the following 264-residue polypeptide: 3-methyl-2-oxobutanoate hydroxymethyltransferase (264 aa).

2 residues coordinate Mg(2+): aspartate 45 and aspartate 84. 3-methyl-2-oxobutanoate is bound by residues 45-46 (DS), aspartate 84, and lysine 112. A Mg(2+)-binding site is contributed by glutamate 114. Glutamate 181 acts as the Proton acceptor in catalysis.

This sequence belongs to the PanB family. In terms of assembly, homodecamer; pentamer of dimers. It depends on Mg(2+) as a cofactor.

The protein localises to the cytoplasm. The enzyme catalyses 3-methyl-2-oxobutanoate + (6R)-5,10-methylene-5,6,7,8-tetrahydrofolate + H2O = 2-dehydropantoate + (6S)-5,6,7,8-tetrahydrofolate. It participates in cofactor biosynthesis; (R)-pantothenate biosynthesis; (R)-pantoate from 3-methyl-2-oxobutanoate: step 1/2. In terms of biological role, catalyzes the reversible reaction in which hydroxymethyl group from 5,10-methylenetetrahydrofolate is transferred onto alpha-ketoisovalerate to form ketopantoate. The chain is 3-methyl-2-oxobutanoate hydroxymethyltransferase from Vibrio vulnificus (strain YJ016).